The primary structure comprises 426 residues: Serine--tRNA ligase (426 aa).

233 to 235 (TAE) is an L-serine binding site. Residue 264-266 (RRE) coordinates ATP. Glu-287 contributes to the L-serine binding site. 351–354 (EISS) contacts ATP. Ser-386 contributes to the L-serine binding site.

This sequence belongs to the class-II aminoacyl-tRNA synthetase family. Type-1 seryl-tRNA synthetase subfamily. Homodimer. The tRNA molecule binds across the dimer.

It localises to the cytoplasm. It carries out the reaction tRNA(Ser) + L-serine + ATP = L-seryl-tRNA(Ser) + AMP + diphosphate + H(+). The catalysed reaction is tRNA(Sec) + L-serine + ATP = L-seryl-tRNA(Sec) + AMP + diphosphate + H(+). The protein operates within aminoacyl-tRNA biosynthesis; selenocysteinyl-tRNA(Sec) biosynthesis; L-seryl-tRNA(Sec) from L-serine and tRNA(Sec): step 1/1. In terms of biological role, catalyzes the attachment of serine to tRNA(Ser). Is also able to aminoacylate tRNA(Sec) with serine, to form the misacylated tRNA L-seryl-tRNA(Sec), which will be further converted into selenocysteinyl-tRNA(Sec). The protein is Serine--tRNA ligase of Prochlorococcus marinus (strain NATL1A).